A 78-amino-acid polypeptide reads, in one-letter code: MIIPWQEIDQETLNNLMESIVLREGTDYGSQELSFETKVEQLKQRLKSGEAVIVYSELHESVDVVNKDSVTGNEPDGQ.

Belongs to the UPF0270 family.

This is UPF0270 protein IL0325 from Idiomarina loihiensis (strain ATCC BAA-735 / DSM 15497 / L2-TR).